Here is a 356-residue protein sequence, read N- to C-terminus: UDP-N-acetylglucosamine--N-acetylmuramyl-(pentapeptide) pyrophosphoryl-undecaprenol N-acetylglucosamine transferase (356 aa).

UDP-N-acetyl-alpha-D-glucosamine-binding positions include 11-13, N123, R159, and S192; that span reads TAG.

Belongs to the glycosyltransferase 28 family. MurG subfamily.

It localises to the cell membrane. It carries out the reaction di-trans,octa-cis-undecaprenyl diphospho-N-acetyl-alpha-D-muramoyl-L-alanyl-D-glutamyl-meso-2,6-diaminopimeloyl-D-alanyl-D-alanine + UDP-N-acetyl-alpha-D-glucosamine = di-trans,octa-cis-undecaprenyl diphospho-[N-acetyl-alpha-D-glucosaminyl-(1-&gt;4)]-N-acetyl-alpha-D-muramoyl-L-alanyl-D-glutamyl-meso-2,6-diaminopimeloyl-D-alanyl-D-alanine + UDP + H(+). Its pathway is cell wall biogenesis; peptidoglycan biosynthesis. Cell wall formation. Catalyzes the transfer of a GlcNAc subunit on undecaprenyl-pyrophosphoryl-MurNAc-pentapeptide (lipid intermediate I) to form undecaprenyl-pyrophosphoryl-MurNAc-(pentapeptide)GlcNAc (lipid intermediate II). This Tropheryma whipplei (strain Twist) (Whipple's bacillus) protein is UDP-N-acetylglucosamine--N-acetylmuramyl-(pentapeptide) pyrophosphoryl-undecaprenol N-acetylglucosamine transferase.